The following is a 153-amino-acid chain: Endoribonuclease YbeY (153 aa).

Zn(2+)-binding residues include His-118, His-122, and His-128.

This sequence belongs to the endoribonuclease YbeY family. Zn(2+) serves as cofactor.

The protein resides in the cytoplasm. Its function is as follows. Single strand-specific metallo-endoribonuclease involved in late-stage 70S ribosome quality control and in maturation of the 3' terminus of the 16S rRNA. The polypeptide is Endoribonuclease YbeY (Clostridioides difficile (strain 630) (Peptoclostridium difficile)).